The following is a 163-amino-acid chain: NADH-quinone oxidoreductase subunit I (163 aa).

4Fe-4S ferredoxin-type domains follow at residues 54-84 (LRRY…IDSA) and 94-123 (TRYD…ETHI). The [4Fe-4S] cluster site is built by C64, C67, C70, C74, C103, C106, C109, and C113.

It belongs to the complex I 23 kDa subunit family. As to quaternary structure, NDH-1 is composed of 14 different subunits. Subunits NuoA, H, J, K, L, M, N constitute the membrane sector of the complex. It depends on [4Fe-4S] cluster as a cofactor.

It is found in the cell inner membrane. It catalyses the reaction a quinone + NADH + 5 H(+)(in) = a quinol + NAD(+) + 4 H(+)(out). In terms of biological role, NDH-1 shuttles electrons from NADH, via FMN and iron-sulfur (Fe-S) centers, to quinones in the respiratory chain. The immediate electron acceptor for the enzyme in this species is believed to be ubiquinone. Couples the redox reaction to proton translocation (for every two electrons transferred, four hydrogen ions are translocated across the cytoplasmic membrane), and thus conserves the redox energy in a proton gradient. This Xanthomonas campestris pv. campestris (strain 8004) protein is NADH-quinone oxidoreductase subunit I.